Here is a 545-residue protein sequence, read N- to C-terminus: MLPINNNFSLPQNSFYNTISGTYADYFSAWDKWEKQALPGEERDEAVSRLKECLINNSDELRLDRLNLSSLPDNLPAQITLLNVSYNQLTNLPELPVTLKKLYSASNKLSELPVLPPALESLQVQHNELENLPALPDSLLTMNISYNEIVSLPSLPQALKNLRATRNFLTELPAFSEGNNPVVREYFFDRNQISHIPESILNLRNECSIHISDNPLSSHALQALQRLTSSPDYHGPRIYFSMSDGQQNTLHRPLADAVTAWFPENKQSDVSQIWHAFEHEEHANTFSAFLDRLSDTVSARNTSGFREQVAAWLEKLSASAELRQQSFAVAADATESCEDRVALTWNNLRKTLLVHQASEGLFDNDTGALLSLGREMFRLEILEDIARDKVRTLHFVDEIEVYLAFQTMLAEKLQLSTAVKEMRFYGVSGVTANDLRTAEAMVRSREENEFTDWFSLWGPWHAVLKRTEADRWAQAEEQKYEMLENEYPQRVADRLKASGLSGDADAEREAGAQVMRETEQQIYRQLTDEVLALRLSENGSQLHHS.

The interaction with target proteins stretch occupies residues 1–242 (MLPINNNFSL…YHGPRIYFSM (242 aa)). LRR repeat units follow at residues 57–77 (NSDE…NLPA), 78–99 (QITL…PVTL), 100–117 (KKLY…VLPP), 118–139 (ALES…PDSL), 140–157 (LTMN…SLPQ), 158–179 (ALKN…SEGN), 182–203 (VVRE…ILNL), and 205–228 (NECS…QRLT). The segment at 243–250 (SDGQQNTL) is linker. Residues 251-545 (HRPLADAVTA…SENGSQLHHS (295 aa)) are E3 ubiquitin-protein ligase catalytic domain. In terms of domain architecture, NEL spans 253–545 (PLADAVTAWF…SENGSQLHHS (293 aa)). The active-site Glycyl thioester intermediate is the Cys337.

The protein belongs to the LRR-containing bacterial E3 ligase family. As to quaternary structure, also interacts with human and mouse U2AF1 (U2AF35). In terms of processing, ubiquitinated in the presence of host E1 ubiquitin-activating enzyme, E2 ubiquitin-conjugating enzyme and ubiquitin.

The protein localises to the secreted. It is found in the host cytoplasm. It localises to the host nucleus. It catalyses the reaction S-ubiquitinyl-[E2 ubiquitin-conjugating enzyme]-L-cysteine + [acceptor protein]-L-lysine = [E2 ubiquitin-conjugating enzyme]-L-cysteine + N(6)-ubiquitinyl-[acceptor protein]-L-lysine.. With respect to regulation, exists in an autoinhibited state in the absence of substrate protein, due to interactions of the leucine-rich repeats with NEL domain. Is activated upon binding to a substrate protein. Functionally, effector E3 ubiquitin ligase that interferes with host's ubiquitination pathway and modulates the acute inflammatory responses, thus facilitating bacterial colonization within the host cell. Interacts with IKBKG (NEMO) and TNIP1 (ABIN-1), a ubiquitin-binding adapter protein, which results in TNIP1-dependent 'Lys-27'-linked polyubiquitination of IKBKG. Consequently, polyubiquitinated IKBKG undergoes proteasome-dependent degradation, which perturbs NF-kappa-B activation during bacterial infection. Mediates polyubiquitination of host U2AF1, leading to its proteasomal degradation. Catalyzes 'Lys-48'-linked polyubiquitination and subsequent degradation of a subset of host guanylate-binding proteins (GBP1, GBP2, GBP4 and GBP6), thereby suppressing host cell defense. In contrast, host GBP3 and GBP7 are not ubiquitinated by IpaH9.8. Uses UBE2D2 (UBCH5B) as an E2 ubiquitin-conjugating enzyme. This Shigella flexneri serotype X (strain 2002017) protein is E3 ubiquitin-protein ligase ipaH9.8 (ipaH9.8).